Consider the following 149-residue polypeptide: Chromophore lyase CpcS/CpeS homolog (149 aa).

The protein belongs to the CpcS/CpeS biliprotein lyase family.

The protein resides in the plastid. Its subcellular location is the chloroplast. Might function to covalently attach a chromophore to Cys residue(s) of phycobiliproteins. The polypeptide is Chromophore lyase CpcS/CpeS homolog (Pyropia yezoensis (Susabi-nori)).